The sequence spans 92 residues: Large ribosomal subunit protein bL31 (92 aa).

This sequence belongs to the bacterial ribosomal protein bL31 family. Type A subfamily. Part of the 50S ribosomal subunit.

In terms of biological role, binds the 23S rRNA. The protein is Large ribosomal subunit protein bL31 of Mesoplasma florum (strain ATCC 33453 / NBRC 100688 / NCTC 11704 / L1) (Acholeplasma florum).